Here is a 170-residue protein sequence, read N- to C-terminus: Cytochrome c-type biogenesis protein CcmE (170 aa).

At 1 to 7 (MTRKQRR) the chain is on the cytoplasmic side. The chain crosses the membrane as a helical; Signal-anchor for type II membrane protein span at residues 8 to 28 (LTIIGGALFVLAVAAGLVLNA). Residues 29–170 (LRDSIVFFST…GEKTAAGATQ (142 aa)) lie on the Periplasmic side of the membrane. 2 residues coordinate heme: His122 and Tyr126. Positions 137–146 (KQGHWKDDYG) are enriched in basic and acidic residues. The tract at residues 137-170 (KQGHWKDDYGKPQAAKPGPVSMREGEKTAAGATQ) is disordered.

Belongs to the CcmE/CycJ family.

Its subcellular location is the cell inner membrane. Functionally, heme chaperone required for the biogenesis of c-type cytochromes. Transiently binds heme delivered by CcmC and transfers the heme to apo-cytochromes in a process facilitated by CcmF and CcmH. The chain is Cytochrome c-type biogenesis protein CcmE from Bradyrhizobium sp. (strain BTAi1 / ATCC BAA-1182).